Reading from the N-terminus, the 191-residue chain is Protein GrpE (191 aa).

The span at 1–13 (MSEKKNKKEKLAE) shows a compositional bias: basic and acidic residues. The segment at 1 to 40 (MSEKKNKKEKLAEEIEQEELNSLDESVETVEEEATEETLT) is disordered. Positions 14–40 (EIEQEELNSLDESVETVEEEATEETLT) are enriched in acidic residues.

The protein belongs to the GrpE family. Homodimer.

The protein resides in the cytoplasm. Its function is as follows. Participates actively in the response to hyperosmotic and heat shock by preventing the aggregation of stress-denatured proteins, in association with DnaK and GrpE. It is the nucleotide exchange factor for DnaK and may function as a thermosensor. Unfolded proteins bind initially to DnaJ; upon interaction with the DnaJ-bound protein, DnaK hydrolyzes its bound ATP, resulting in the formation of a stable complex. GrpE releases ADP from DnaK; ATP binding to DnaK triggers the release of the substrate protein, thus completing the reaction cycle. Several rounds of ATP-dependent interactions between DnaJ, DnaK and GrpE are required for fully efficient folding. This is Protein GrpE from Listeria innocua serovar 6a (strain ATCC BAA-680 / CLIP 11262).